The chain runs to 354 residues: uncharacterized protein (354 aa).

It belongs to the asfivirus B354L family.

This is an uncharacterized protein from Ornithodoros (relapsing fever ticks).